Here is a 305-residue protein sequence, read N- to C-terminus: tRNA pseudouridine synthase B (305 aa).

The Nucleophile role is filled by D48.

The protein belongs to the pseudouridine synthase TruB family. Type 1 subfamily.

It catalyses the reaction uridine(55) in tRNA = pseudouridine(55) in tRNA. In terms of biological role, responsible for synthesis of pseudouridine from uracil-55 in the psi GC loop of transfer RNAs. This chain is tRNA pseudouridine synthase B, found in Pseudomonas fluorescens (strain Pf0-1).